A 671-amino-acid polypeptide reads, in one-letter code: K(+)-insensitive pyrophosphate-energized proton pump (671 aa).

Transmembrane regions (helical) follow at residues 3 to 23, 57 to 77, 79 to 99, 128 to 148, and 156 to 176; these read SLIF…AFFA, TIAV…DDGL, IAIG…IGMS, AVTG…FYIL, and VGFG…GGIF. Lys178 serves as a coordination point for substrate. Mg(2+) contacts are provided by Asp181, Asp185, Asn208, and Asp211. Transmembrane regions (helical) follow at residues 223-243, 249-269, 285-305, 310-330, 366-386, and 391-411; these read LFET…LIIG, ILYP…SVFF, GVGG…NSLM, LFYA…ITEY, LVPT…VGGA, and IGLY…GMIV. Asp421 contacts Mg(2+). Transmembrane regions (helical) follow at residues 452-472, 490-510, 558-578, and 580-600; these read AVTK…LFAD, VVLA…AVTM, MAMP…ILGP, and ALAG…LMMD. Residues Asp607, Asp633, and Asp637 each contribute to the Ca(2+) site. Lys640 contributes to the substrate binding site. Residues 646–666 form a helical membrane-spanning segment; the sequence is ALNALIKVVNMVAILFSSLII.

This sequence belongs to the H(+)-translocating pyrophosphatase (TC 3.A.10) family. K(+)-insensitive subfamily. As to quaternary structure, homodimer. Requires Mg(2+) as cofactor.

The protein resides in the cell membrane. The enzyme catalyses diphosphate + H2O + H(+)(in) = 2 phosphate + 2 H(+)(out). Proton pump that utilizes the energy of pyrophosphate hydrolysis as the driving force for proton movement across the membrane. Generates a proton motive force. The polypeptide is K(+)-insensitive pyrophosphate-energized proton pump (Methanosarcina acetivorans (strain ATCC 35395 / DSM 2834 / JCM 12185 / C2A)).